We begin with the raw amino-acid sequence, 555 residues long: Disabled homolog 1 (555 aa).

The tract at residues 1–26 (MSTETELQVAVKTSAKKDSRKKGQDR) is disordered. The segment covering 15 to 26 (AKKDSRKKGQDR) has biased composition (basic and acidic residues). A PID domain is found at 36–189 (KGEGVRYKAK…CEQAVYQTIL (154 aa)). 3 positions are modified to phosphotyrosine: tyrosine 198, tyrosine 220, and tyrosine 232. 3 disordered regions span residues 384 to 410 (LTPLATVPGTSDSTRPSPQTDKPRQKM), 418 to 437 (FQMAQPPPVPSRKPDQPSLT), and 468 to 555 (NLTP…QAGS). The segment covering 391–403 (PGTSDSTRPSPQT) has biased composition (polar residues). Low complexity-rich tracts occupy residues 470–479 (TPVTSTTPST) and 487–501 (PRQSSPSKSSASHAS). Serine 491 carries the phosphoserine; by CDK5 modification. Over residues 504–513 (TTDDIFEEGF) the composition is skewed to acidic residues.

As to quaternary structure, associates with the SH2 domains of SRC, FYN and ABL. Interacts (phosphorylated on tyrosine residues) with CRK and CRKL (via respective SH2 domain). Interacts with DAB2IP, SIAH1, LRP8 and VLDLR. Interacts with LRP1. Interacts with APLP1 (via NPXY motif). Interacts with DAB2IP. Interacts with ZSWIM8. Post-translationally, phosphorylated by FYN on Tyr-198 and Tyr-220 upon reelin induction in embryonic neurons. Also phosphorylated on Ser-491 independently of reelin signaling. Ubiquitinated by various cullin-5-RING E3 ubiquitin-protein ligase complexes (ECS complexes) following ligand-binding and phosphorylation, leading to its degradation. Ubiquitinated by the ECS(SOCS7) complex in the cortical plate of the developing cerebral cortex following ligand-binding and phosphorylation by FYN, leading to its degradation by the proteasome. Recognized by ZSWIM8 through a disorder targets misorder mechanism that eliminates misfolded DAB1 via ubiquitination and proteasomal degradation.

It localises to the cytoplasm. Functionally, signaling adapter of the reelin-mediated signaling pathway, which regulates the migration and differentiation of postmitotic neurons during brain development. Mediates intracellular transduction of Reelin signaling following reelin (RELN)-binding to its receptor: acts by docking proteins through its phosphotyrosine residues and PID domain. This Macaca fascicularis (Crab-eating macaque) protein is Disabled homolog 1 (DAB1).